The following is a 361-amino-acid chain: GTPase Obg (361 aa).

The region spanning 1 to 159 (MKFVDEAFID…KNLKLELKVL (159 aa)) is the Obg domain. Positions 160 to 334 (ADVGLLGMPN…LIKTIYQHVK (175 aa)) constitute an OBG-type G domain. Residues 166–173 (GMPNAGKS), 191–195 (FTTLH), 213–216 (DLPG), 284–287 (NKLD), and 315–317 (SAL) contribute to the GTP site. Mg(2+) contacts are provided by serine 173 and threonine 193. Positions 339–361 (SEQPVEEVDPRFVPLPPESPETP) are disordered. A compositionally biased stretch (pro residues) spans 351–361 (VPLPPESPETP).

Belongs to the TRAFAC class OBG-HflX-like GTPase superfamily. OBG GTPase family. As to quaternary structure, monomer. The cofactor is Mg(2+).

It localises to the cytoplasm. In terms of biological role, an essential GTPase which binds GTP, GDP and possibly (p)ppGpp with moderate affinity, with high nucleotide exchange rates and a fairly low GTP hydrolysis rate. Plays a role in control of the cell cycle, stress response, ribosome biogenesis and in those bacteria that undergo differentiation, in morphogenesis control. The sequence is that of GTPase Obg from Polaromonas sp. (strain JS666 / ATCC BAA-500).